The sequence spans 307 residues: Small ribosomal subunit protein uS5m (307 aa).

Residues 1–13 (MFKRQLSTSVRYL) constitute a mitochondrion transit peptide. Residues 144 to 208 (LTMKPLVMKR…WDAVRNLKEI (65 aa)) enclose the S5 DRBM domain.

Belongs to the universal ribosomal protein uS5 family. In terms of assembly, component of the mitochondrial small ribosomal subunit (mt-SSU). Mature yeast 74S mitochondrial ribosomes consist of a small (37S) and a large (54S) subunit. The 37S small subunit contains a 15S ribosomal RNA (15S mt-rRNA) and 34 different proteins. The 54S large subunit contains a 21S rRNA (21S mt-rRNA) and 46 different proteins. uS3m, uS4m and uS5m form the narrow entry site of the mRNA channel.

The protein localises to the mitochondrion. Functionally, component of the mitochondrial ribosome (mitoribosome), a dedicated translation machinery responsible for the synthesis of mitochondrial genome-encoded proteins, including at least some of the essential transmembrane subunits of the mitochondrial respiratory chain. The mitoribosomes are attached to the mitochondrial inner membrane and translation products are cotranslationally integrated into the membrane. In Saccharomyces cerevisiae (strain ATCC 204508 / S288c) (Baker's yeast), this protein is Small ribosomal subunit protein uS5m (MRPS5).